The chain runs to 358 residues: Vesicular integral-membrane protein VIP36 (358 aa).

The N-terminal stretch at 1–46 (MAAEAWLWRWGWGWGQRCPGRPGLPGPGPSPTTFLHLLLLLGPVAA) is a signal peptide. Residues 47 to 324 (DITDGNSEHL…FRNGPLTGWR (278 aa)) lie on the Lumenal side of the membrane. Positions 54 to 278 (EHLKREHSLI…DIISIKLFQL (225 aa)) constitute an L-type lectin-like domain. S98 and D133 together coordinate a carbohydrate. D164, Y166, and N168 together coordinate Ca(2+). 166–168 (YPN) is a binding site for a carbohydrate. N185 carries N-linked (GlcNAc...) asparagine glycosylation. H192 contacts a carbohydrate. D195 is a Ca(2+) binding site. C204 and C241 are joined by a disulfide. Residue 262-264 (GDL) participates in a carbohydrate binding. Residues 325-347 (VFLLLLCALLGVVVCAVVGAVVF) traverse the membrane as a helical segment. At 348–358 (QKRQERNKRFY) the chain is on the cytoplasmic side.

Requires Ca(2+) as cofactor.

It localises to the golgi apparatus membrane. Plays a role as an intracellular lectin in the early secretory pathway. Interacts with N-acetyl-D-galactosamine and high-mannose type glycans and may also bind to O-linked glycans. Involved in the transport and sorting of glycoproteins carrying high mannose-type glycans. In Mus musculus (Mouse), this protein is Vesicular integral-membrane protein VIP36 (Lman2).